Here is a 606-residue protein sequence, read N- to C-terminus: Aspartate--tRNA(Asp/Asn) ligase (606 aa).

Glu177 is a binding site for L-aspartate. Residues 201–204 (QLFK) form an aspartate region. An L-aspartate-binding site is contributed by Arg223. ATP is bound by residues 223 to 225 (RDE) and Gln232. His461 serves as a coordination point for L-aspartate. Glu499 serves as a coordination point for ATP. Arg506 is an L-aspartate binding site. 551–554 (GMDR) is an ATP binding site.

Belongs to the class-II aminoacyl-tRNA synthetase family. Type 1 subfamily. As to quaternary structure, homodimer.

It localises to the cytoplasm. It catalyses the reaction tRNA(Asx) + L-aspartate + ATP = L-aspartyl-tRNA(Asx) + AMP + diphosphate. In terms of biological role, aspartyl-tRNA synthetase with relaxed tRNA specificity since it is able to aspartylate not only its cognate tRNA(Asp) but also tRNA(Asn). Reaction proceeds in two steps: L-aspartate is first activated by ATP to form Asp-AMP and then transferred to the acceptor end of tRNA(Asp/Asn). The polypeptide is Aspartate--tRNA(Asp/Asn) ligase (Prochlorococcus marinus (strain MIT 9313)).